Here is a 378-residue protein sequence, read N- to C-terminus: ATP phosphoribosyltransferase regulatory subunit (378 aa).

It belongs to the class-II aminoacyl-tRNA synthetase family. HisZ subfamily. In terms of assembly, heteromultimer composed of HisG and HisZ subunits.

Its subcellular location is the cytoplasm. It participates in amino-acid biosynthesis; L-histidine biosynthesis; L-histidine from 5-phospho-alpha-D-ribose 1-diphosphate: step 1/9. In terms of biological role, required for the first step of histidine biosynthesis. May allow the feedback regulation of ATP phosphoribosyltransferase activity by histidine. This is ATP phosphoribosyltransferase regulatory subunit from Brucella abortus (strain 2308).